The primary structure comprises 536 residues: Putative UDP-glucuronosyltransferase ugt-47 (536 aa).

Positions 1 to 21 (MMLQTSTILQLLLFLVGSVSA) are cleaved as a signal peptide. N-linked (GlcNAc...) asparagine glycans are attached at residues Asn-52 and Asn-308. A helical membrane pass occupies residues 497–517 (IIVPVLFVLLYCLIIPFFKLI).

It belongs to the UDP-glycosyltransferase family.

Its subcellular location is the membrane. The enzyme catalyses glucuronate acceptor + UDP-alpha-D-glucuronate = acceptor beta-D-glucuronoside + UDP + H(+). In Caenorhabditis briggsae, this protein is Putative UDP-glucuronosyltransferase ugt-47 (ugt-47).